The chain runs to 192 residues: Imidazoleglycerol-phosphate dehydratase (192 aa).

This sequence belongs to the imidazoleglycerol-phosphate dehydratase family.

It is found in the cytoplasm. The enzyme catalyses D-erythro-1-(imidazol-4-yl)glycerol 3-phosphate = 3-(imidazol-4-yl)-2-oxopropyl phosphate + H2O. The protein operates within amino-acid biosynthesis; L-histidine biosynthesis; L-histidine from 5-phospho-alpha-D-ribose 1-diphosphate: step 6/9. The polypeptide is Imidazoleglycerol-phosphate dehydratase (Staphylococcus aureus (strain JH9)).